The sequence spans 226 residues: Glutathione peroxidase 3 (226 aa).

A signal peptide spans 1–24 (MARLLQASCLLSLLLAGFLPQSRG). Sec-73 is a catalytic residue. A non-standard amino acid (selenocysteine) is located at residue Sec-73.

Belongs to the glutathione peroxidase family. Homotetramer. In terms of tissue distribution, secreted in plasma.

It localises to the secreted. It carries out the reaction 2 glutathione + H2O2 = glutathione disulfide + 2 H2O. The catalysed reaction is tert-butyl hydroperoxide + 2 glutathione = tert-butanol + glutathione disulfide + H2O. Protects cells and enzymes from oxidative damage, by catalyzing the reduction of hydrogen peroxide, lipid peroxides and organic hydroperoxide, by glutathione. This is Glutathione peroxidase 3 from Sapajus apella (Brown-capped capuchin).